We begin with the raw amino-acid sequence, 337 residues long: MTQPIARSIPLQVVSGDTAAPASLQTGVKQIGGDKINRSPVQFVDAPVLRKPSWIRVRIPSGNAVQNLKAKLRENRLVTVCEEASCPNIHECFSHGTATFMILGEVCTRRCSFCDVAHGRPKPPDASEPASLATTVADMGLKYVVVTSVDRDDLRDGGAQHFVDCISAIRASAPKTRIEILTPDFRGKGRMDRALEILATSPPDVFNHNIETVPDLYPNVRPGADYQWSLTLLQRFKAQHPTIATKSGIMLGLGETMEQVQVTLRDLRAHDVDMITIGQYLQPTPHHHPVMRYWTPEEYKALEEYGNALGFSHVASGPMVRSSYHADRQAAGAGVAA.

The [4Fe-4S] cluster site is built by Cys81, Cys86, Cys92, Cys107, Cys111, Cys114, and Ser323. The region spanning 93 to 312 (FSHGTATFMI…EEYGNALGFS (220 aa)) is the Radical SAM core domain.

The protein belongs to the radical SAM superfamily. Lipoyl synthase family. [4Fe-4S] cluster is required as a cofactor.

It localises to the cytoplasm. The enzyme catalyses [[Fe-S] cluster scaffold protein carrying a second [4Fe-4S](2+) cluster] + N(6)-octanoyl-L-lysyl-[protein] + 2 oxidized [2Fe-2S]-[ferredoxin] + 2 S-adenosyl-L-methionine + 4 H(+) = [[Fe-S] cluster scaffold protein] + N(6)-[(R)-dihydrolipoyl]-L-lysyl-[protein] + 4 Fe(3+) + 2 hydrogen sulfide + 2 5'-deoxyadenosine + 2 L-methionine + 2 reduced [2Fe-2S]-[ferredoxin]. The protein operates within protein modification; protein lipoylation via endogenous pathway; protein N(6)-(lipoyl)lysine from octanoyl-[acyl-carrier-protein]: step 2/2. In terms of biological role, catalyzes the radical-mediated insertion of two sulfur atoms into the C-6 and C-8 positions of the octanoyl moiety bound to the lipoyl domains of lipoate-dependent enzymes, thereby converting the octanoylated domains into lipoylated derivatives. In Xanthomonas campestris pv. campestris (strain 8004), this protein is Lipoyl synthase.